The following is a 146-amino-acid chain: Large ribosomal subunit protein bL21 (146 aa).

The segment at 115–146 (KSISLGKSAPKSSAKKETVKKETKPKSEKSTN) is disordered. The segment covering 128–146 (AKKETVKKETKPKSEKSTN) has biased composition (basic and acidic residues).

It belongs to the bacterial ribosomal protein bL21 family. As to quaternary structure, part of the 50S ribosomal subunit. Contacts protein L20.

Its function is as follows. This protein binds to 23S rRNA in the presence of protein L20. The chain is Large ribosomal subunit protein bL21 from Prochlorococcus marinus (strain MIT 9312).